The following is a 629-amino-acid chain: Bifunctional protein ArgHA (629 aa).

Residues 1–499 (MALWGGRFSQ…NLPRSRSDLV (499 aa)) are argininosuccinate lyase. The N-acetyltransferase domain occupies 464-598 (ISIRAARLTD…EKVLKDCDMC (135 aa)). The tract at residues 500–629 (KAVGTFAVTE…INLKAEKLAS (130 aa)) is amino-acid acetyltransferase.

This sequence in the N-terminal section; belongs to the lyase 1 family. Argininosuccinate lyase subfamily. In the C-terminal section; belongs to the acetyltransferase family. ArgA subfamily.

It is found in the cytoplasm. It carries out the reaction 2-(N(omega)-L-arginino)succinate = fumarate + L-arginine. The enzyme catalyses L-glutamate + acetyl-CoA = N-acetyl-L-glutamate + CoA + H(+). It functions in the pathway amino-acid biosynthesis; L-arginine biosynthesis; N(2)-acetyl-L-ornithine from L-glutamate: step 1/4. Its pathway is amino-acid biosynthesis; L-arginine biosynthesis; L-arginine from L-ornithine and carbamoyl phosphate: step 3/3. The protein is Bifunctional protein ArgHA (argHA) of Moritella abyssi.